We begin with the raw amino-acid sequence, 117 residues long: Large ribosomal subunit protein bL19 (117 aa).

Belongs to the bacterial ribosomal protein bL19 family.

This protein is located at the 30S-50S ribosomal subunit interface and may play a role in the structure and function of the aminoacyl-tRNA binding site. In Shewanella halifaxensis (strain HAW-EB4), this protein is Large ribosomal subunit protein bL19.